A 101-amino-acid chain; its full sequence is ATP synthase subunit c (101 aa).

2 consecutive transmembrane segments (helical) span residues 28-48 and 72-92; these read SVVA…VGMG and MFIA…IALI.

The protein belongs to the ATPase C chain family. F-type ATPases have 2 components, F(1) - the catalytic core - and F(0) - the membrane proton channel. F(1) has five subunits: alpha(3), beta(3), gamma(1), delta(1), epsilon(1). F(0) has three main subunits: a(1), b(2) and c(10-14). The alpha and beta chains form an alternating ring which encloses part of the gamma chain. F(1) is attached to F(0) by a central stalk formed by the gamma and epsilon chains, while a peripheral stalk is formed by the delta and b chains.

The protein resides in the cell inner membrane. Functionally, f(1)F(0) ATP synthase produces ATP from ADP in the presence of a proton or sodium gradient. F-type ATPases consist of two structural domains, F(1) containing the extramembraneous catalytic core and F(0) containing the membrane proton channel, linked together by a central stalk and a peripheral stalk. During catalysis, ATP synthesis in the catalytic domain of F(1) is coupled via a rotary mechanism of the central stalk subunits to proton translocation. Its function is as follows. Key component of the F(0) channel; it plays a direct role in translocation across the membrane. A homomeric c-ring of between 10-14 subunits forms the central stalk rotor element with the F(1) delta and epsilon subunits. This Sulfurovum sp. (strain NBC37-1) protein is ATP synthase subunit c.